The following is a 397-amino-acid chain: MSAVLVVNSGSSSLKYQLIDAKSEEALATGLIERVGEGEGRIRHRGPGGSAEYTLVIPDHTAAFRAMLAAFGTDGSSLVEHPLDAVGHRVVHGGKRFFEPTIVTPLVEANIDDLADLAPLHNPANLDGIRAARQAFPAVPHVAVFDTAFHQTLEPAAYTYAIDAALAEEHRVRRYGFHGTSHKYVSGAVAELLGRPLGELKQIVLHLGNGASACAVDGGRSIDTSMGMTPLEGLVMGTRSGDIDPAVLFHLSRRAGLGIDELDELLNRRSGLLGLTGHGDMRDVRRVAESGDAVARLALDTVAHRLKHYIGAYTALLGGLDALTFTAGVGENDPDLRAAACKGLGVLGIQLDPERNAARSPGARIVSADGSPVTVLVVPTNEELEIARQALQAVAAG.

N8 contributes to the Mg(2+) binding site. Position 15 (K15) interacts with ATP. R89 contributes to the substrate binding site. Residue D146 is the Proton donor/acceptor of the active site. ATP is bound by residues 206–210 (HLGNG), 280–282 (DMR), and 328–332 (GVGEN). E382 lines the Mg(2+) pocket.

Belongs to the acetokinase family. In terms of assembly, homodimer. Mg(2+) serves as cofactor. It depends on Mn(2+) as a cofactor.

It is found in the cytoplasm. The enzyme catalyses acetate + ATP = acetyl phosphate + ADP. It participates in metabolic intermediate biosynthesis; acetyl-CoA biosynthesis; acetyl-CoA from acetate: step 1/2. In terms of biological role, catalyzes the formation of acetyl phosphate from acetate and ATP. Can also catalyze the reverse reaction. The polypeptide is Acetate kinase (Leifsonia xyli subsp. xyli (strain CTCB07)).